The primary structure comprises 674 residues: DNA mismatch repair protein MutL (674 aa).

It belongs to the DNA mismatch repair MutL/HexB family.

In terms of biological role, this protein is involved in the repair of mismatches in DNA. It is required for dam-dependent methyl-directed DNA mismatch repair. May act as a 'molecular matchmaker', a protein that promotes the formation of a stable complex between two or more DNA-binding proteins in an ATP-dependent manner without itself being part of a final effector complex. This Clostridium perfringens (strain ATCC 13124 / DSM 756 / JCM 1290 / NCIMB 6125 / NCTC 8237 / Type A) protein is DNA mismatch repair protein MutL.